The chain runs to 476 residues: Glucan endo-1,3-beta-glucosidase 9 (476 aa).

An N-terminal signal peptide occupies residues 1–25 (MARRLFLLLLAVTAGLSLTGTTVRA). N88 and N101 each carry an N-linked (GlcNAc...) asparagine glycan. The active-site Proton donor is the E122. Residues N184, N216, N277, N320, N342, N374, and N405 are each glycosylated (N-linked (GlcNAc...) asparagine). C364 and C424 are oxidised to a cystine. S453 carries the GPI-anchor amidated serine lipid modification. Residues 454-476 (SSQTPNFFQSWPLLLLFLLSGLF) constitute a propeptide, removed in mature form.

This sequence belongs to the glycosyl hydrolase 17 family. In terms of processing, contains two additional disulfide bonds.

The protein resides in the secreted. The protein localises to the cell wall. It localises to the cell membrane. The enzyme catalyses Hydrolysis of (1-&gt;3)-beta-D-glucosidic linkages in (1-&gt;3)-beta-D-glucans.. This chain is Glucan endo-1,3-beta-glucosidase 9, found in Arabidopsis thaliana (Mouse-ear cress).